A 479-amino-acid chain; its full sequence is Aspartyl/glutamyl-tRNA(Asn/Gln) amidotransferase subunit B (479 aa).

It belongs to the GatB/GatE family. GatB subfamily. In terms of assembly, heterotrimer of A, B and C subunits.

It catalyses the reaction L-glutamyl-tRNA(Gln) + L-glutamine + ATP + H2O = L-glutaminyl-tRNA(Gln) + L-glutamate + ADP + phosphate + H(+). It carries out the reaction L-aspartyl-tRNA(Asn) + L-glutamine + ATP + H2O = L-asparaginyl-tRNA(Asn) + L-glutamate + ADP + phosphate + 2 H(+). In terms of biological role, allows the formation of correctly charged Asn-tRNA(Asn) or Gln-tRNA(Gln) through the transamidation of misacylated Asp-tRNA(Asn) or Glu-tRNA(Gln) in organisms which lack either or both of asparaginyl-tRNA or glutaminyl-tRNA synthetases. The reaction takes place in the presence of glutamine and ATP through an activated phospho-Asp-tRNA(Asn) or phospho-Glu-tRNA(Gln). This chain is Aspartyl/glutamyl-tRNA(Asn/Gln) amidotransferase subunit B, found in Geobacter sp. (strain M21).